Here is a 181-residue protein sequence, read N- to C-terminus: ATP-dependent protease subunit ClpQ (181 aa).

Ser-2 is an active-site residue. Positions 165, 168, and 171 each coordinate Na(+).

The protein belongs to the peptidase T1B family. HslV subfamily. A double ring-shaped homohexamer of ClpQ is capped on each side by a ring-shaped ClpY homohexamer. The assembly of the ClpQ/ClpY complex is dependent on binding of ATP.

The protein localises to the cytoplasm. Protease subunit of a proteasome-like degradation complex. The polypeptide is ATP-dependent protease subunit ClpQ (clpQ) (Bacillus velezensis (strain DSM 23117 / BGSC 10A6 / LMG 26770 / FZB42) (Bacillus amyloliquefaciens subsp. plantarum)).